A 443-amino-acid polypeptide reads, in one-letter code: Ribosomal protein uS12 methylthiotransferase RimO (443 aa).

The MTTase N-terminal domain occupies 6-116; that stretch reads PRVGMISLGC…VVNAVHDVVP (111 aa). Cys15, Cys51, Cys80, Cys149, Cys153, and Cys156 together coordinate [4Fe-4S] cluster. The 239-residue stretch at 135–373 folds into the Radical SAM core domain; sequence LTPRHYAYLK…MAHQQAISAA (239 aa). Residues 376–443 enclose the TRAM domain; it reads QMKIGKEIEV…DEYDLWAEML (68 aa).

Belongs to the methylthiotransferase family. RimO subfamily. Requires [4Fe-4S] cluster as cofactor.

It localises to the cytoplasm. It catalyses the reaction L-aspartate(89)-[ribosomal protein uS12]-hydrogen + (sulfur carrier)-SH + AH2 + 2 S-adenosyl-L-methionine = 3-methylsulfanyl-L-aspartate(89)-[ribosomal protein uS12]-hydrogen + (sulfur carrier)-H + 5'-deoxyadenosine + L-methionine + A + S-adenosyl-L-homocysteine + 2 H(+). In terms of biological role, catalyzes the methylthiolation of an aspartic acid residue of ribosomal protein uS12. In Pseudomonas syringae pv. tomato (strain ATCC BAA-871 / DC3000), this protein is Ribosomal protein uS12 methylthiotransferase RimO.